Here is a 152-residue protein sequence, read N- to C-terminus: Nucleoside diphosphate kinase (152 aa).

ATP is bound by residues lysine 11, phenylalanine 59, arginine 87, threonine 93, arginine 104, and asparagine 114. The Pros-phosphohistidine intermediate role is filled by histidine 117.

This sequence belongs to the NDK family. Homotetramer. Mg(2+) is required as a cofactor.

The protein resides in the cytoplasm. The catalysed reaction is a 2'-deoxyribonucleoside 5'-diphosphate + ATP = a 2'-deoxyribonucleoside 5'-triphosphate + ADP. The enzyme catalyses a ribonucleoside 5'-diphosphate + ATP = a ribonucleoside 5'-triphosphate + ADP. In terms of biological role, major role in the synthesis of nucleoside triphosphates other than ATP. The ATP gamma phosphate is transferred to the NDP beta phosphate via a ping-pong mechanism, using a phosphorylated active-site intermediate. The protein is Nucleoside diphosphate kinase of Prochlorococcus marinus (strain MIT 9303).